Consider the following 206-residue polypeptide: uncharacterized protein (206 aa).

A disordered region spans residues 147–206 (REEKAQKSKSKSRNQDERGSPLDERLGPKVSDLTLMERIFQVRRKPRKSRRDRRSRVSKR). Over residues 159 to 173 (RNQDERGSPLDERLG) the composition is skewed to basic and acidic residues. Positions 187 to 206 (QVRRKPRKSRRDRRSRVSKR) are enriched in basic residues.

This is an uncharacterized protein from Schizosaccharomyces pombe (strain 972 / ATCC 24843) (Fission yeast).